The chain runs to 376 residues: Secreted LysM effector LysM9 (376 aa).

The N-terminal stretch at 1 to 25 (MGHFHLSNFIALIGILLVGPTATSG) is a signal peptide. One can recognise a LysM domain in the interval 41–89 (SKYVVQAGETCSAIAQAHSITTADIETYNAQSWAWTGCGQISQGDFICL). The tract at residues 190 to 219 (SSETSSSMTTSTSATTSVPTTTSTTTTTKT) is disordered.

It belongs to the secreted LysM effector family.

It localises to the secreted. Its function is as follows. Secreted LysM effector that might have a role in sequestration of chitin oligosaccharides (breakdown products of fungal cell walls that are released during invasion and act as triggers of host immunity) to dampen host defense. In Penicillium expansum (Blue mold rot fungus), this protein is Secreted LysM effector LysM9.